A 737-amino-acid polypeptide reads, in one-letter code: Phosphoribosylformylglycinamidine synthase subunit PurL (737 aa).

Histidine 50 is an active-site residue. Tyrosine 53 and lysine 92 together coordinate ATP. A Mg(2+)-binding site is contributed by glutamate 94. Residues 95–98 (SHNH) and arginine 117 each bind substrate. The Proton acceptor role is filled by histidine 96. Aspartate 118 serves as a coordination point for Mg(2+). A substrate-binding site is contributed by glutamine 241. Aspartate 269 is a binding site for Mg(2+). 313–315 (ESQ) is a binding site for substrate. ATP contacts are provided by aspartate 494 and glycine 531. Asparagine 532 is a binding site for Mg(2+). Serine 534 contacts substrate.

The protein belongs to the FGAMS family. As to quaternary structure, monomer. Part of the FGAM synthase complex composed of 1 PurL, 1 PurQ and 2 PurS subunits.

The protein resides in the cytoplasm. The enzyme catalyses N(2)-formyl-N(1)-(5-phospho-beta-D-ribosyl)glycinamide + L-glutamine + ATP + H2O = 2-formamido-N(1)-(5-O-phospho-beta-D-ribosyl)acetamidine + L-glutamate + ADP + phosphate + H(+). Its pathway is purine metabolism; IMP biosynthesis via de novo pathway; 5-amino-1-(5-phospho-D-ribosyl)imidazole from N(2)-formyl-N(1)-(5-phospho-D-ribosyl)glycinamide: step 1/2. Functionally, part of the phosphoribosylformylglycinamidine synthase complex involved in the purines biosynthetic pathway. Catalyzes the ATP-dependent conversion of formylglycinamide ribonucleotide (FGAR) and glutamine to yield formylglycinamidine ribonucleotide (FGAM) and glutamate. The FGAM synthase complex is composed of three subunits. PurQ produces an ammonia molecule by converting glutamine to glutamate. PurL transfers the ammonia molecule to FGAR to form FGAM in an ATP-dependent manner. PurS interacts with PurQ and PurL and is thought to assist in the transfer of the ammonia molecule from PurQ to PurL. The protein is Phosphoribosylformylglycinamidine synthase subunit PurL of Nitrobacter winogradskyi (strain ATCC 25391 / DSM 10237 / CIP 104748 / NCIMB 11846 / Nb-255).